A 62-amino-acid polypeptide reads, in one-letter code: Small ribosomal subunit protein bS21C (62 aa).

The interval 43-62 is disordered; sequence EKSKRKKLALHKQSKRRFRT. The segment covering 45-62 has biased composition (basic residues); that stretch reads SKRKKLALHKQSKRRFRT.

It belongs to the bacterial ribosomal protein bS21 family.

In Trichormus variabilis (strain ATCC 29413 / PCC 7937) (Anabaena variabilis), this protein is Small ribosomal subunit protein bS21C.